The primary structure comprises 359 residues: UDP-N-acetylglucosamine--N-acetylmuramyl-(pentapeptide) pyrophosphoryl-undecaprenol N-acetylglucosamine transferase (359 aa).

Residues 15 to 17 (SGG), Asn127, Arg164, Ser192, Ile246, 265 to 270 (ALTVSE), and Gln290 contribute to the UDP-N-acetyl-alpha-D-glucosamine site.

This sequence belongs to the glycosyltransferase 28 family. MurG subfamily.

It localises to the cell membrane. It catalyses the reaction di-trans,octa-cis-undecaprenyl diphospho-N-acetyl-alpha-D-muramoyl-L-alanyl-D-glutamyl-meso-2,6-diaminopimeloyl-D-alanyl-D-alanine + UDP-N-acetyl-alpha-D-glucosamine = di-trans,octa-cis-undecaprenyl diphospho-[N-acetyl-alpha-D-glucosaminyl-(1-&gt;4)]-N-acetyl-alpha-D-muramoyl-L-alanyl-D-glutamyl-meso-2,6-diaminopimeloyl-D-alanyl-D-alanine + UDP + H(+). The protein operates within cell wall biogenesis; peptidoglycan biosynthesis. In terms of biological role, cell wall formation. Catalyzes the transfer of a GlcNAc subunit on undecaprenyl-pyrophosphoryl-MurNAc-pentapeptide (lipid intermediate I) to form undecaprenyl-pyrophosphoryl-MurNAc-(pentapeptide)GlcNAc (lipid intermediate II). In Wigglesworthia glossinidia brevipalpis, this protein is UDP-N-acetylglucosamine--N-acetylmuramyl-(pentapeptide) pyrophosphoryl-undecaprenol N-acetylglucosamine transferase.